The primary structure comprises 271 residues: Putative hydro-lyase OCAR_7359/OCA5_c07590 (271 aa).

It belongs to the D-glutamate cyclase family.

The chain is Putative hydro-lyase OCAR_7359/OCA5_c07590 from Afipia carboxidovorans (strain ATCC 49405 / DSM 1227 / KCTC 32145 / OM5) (Oligotropha carboxidovorans).